A 165-amino-acid polypeptide reads, in one-letter code: MSVLEQKKQIVTEIATKLKESQSTVVVDYRGLNVAEVTELRKQLREAGCEFKVYKNTMTRRAAEVAELTELNDVLVGPTAIAFHNEDAIAPAKIINSFAKEHEALEIKAGVIEGNVASVEEVKALAELPSREGLLSMLLSVLQAPVRNFALATKAVADQKEEQGA.

It belongs to the universal ribosomal protein uL10 family. Part of the ribosomal stalk of the 50S ribosomal subunit. The N-terminus interacts with L11 and the large rRNA to form the base of the stalk. The C-terminus forms an elongated spine to which L12 dimers bind in a sequential fashion forming a multimeric L10(L12)X complex.

Its function is as follows. Forms part of the ribosomal stalk, playing a central role in the interaction of the ribosome with GTP-bound translation factors. In Halalkalibacterium halodurans (strain ATCC BAA-125 / DSM 18197 / FERM 7344 / JCM 9153 / C-125) (Bacillus halodurans), this protein is Large ribosomal subunit protein uL10 (rplJ).